The following is a 372-amino-acid chain: Tyrosine--tRNA ligase (372 aa).

5 residues coordinate L-tyrosine: tyrosine 37, tyrosine 169, glutamine 173, aspartate 176, and glutamine 191. The 'KMSKS' region motif lies at 246 to 250; the sequence is KMSKS. Lysine 249 provides a ligand contact to ATP.

The protein belongs to the class-I aminoacyl-tRNA synthetase family. TyrS type 4 subfamily. As to quaternary structure, homodimer.

It is found in the cytoplasm. It catalyses the reaction tRNA(Tyr) + L-tyrosine + ATP = L-tyrosyl-tRNA(Tyr) + AMP + diphosphate + H(+). Catalyzes the attachment of tyrosine to tRNA(Tyr) in a two-step reaction: tyrosine is first activated by ATP to form Tyr-AMP and then transferred to the acceptor end of tRNA(Tyr). This chain is Tyrosine--tRNA ligase, found in Pyrobaculum calidifontis (strain DSM 21063 / JCM 11548 / VA1).